The sequence spans 272 residues: 2-succinyl-6-hydroxy-2,4-cyclohexadiene-1-carboxylate synthase (272 aa).

This sequence belongs to the AB hydrolase superfamily. MenH family. Monomer.

It carries out the reaction 5-enolpyruvoyl-6-hydroxy-2-succinyl-cyclohex-3-ene-1-carboxylate = (1R,6R)-6-hydroxy-2-succinyl-cyclohexa-2,4-diene-1-carboxylate + pyruvate. It functions in the pathway quinol/quinone metabolism; 1,4-dihydroxy-2-naphthoate biosynthesis; 1,4-dihydroxy-2-naphthoate from chorismate: step 3/7. Its pathway is quinol/quinone metabolism; menaquinone biosynthesis. In terms of biological role, catalyzes a proton abstraction reaction that results in 2,5-elimination of pyruvate from 2-succinyl-5-enolpyruvyl-6-hydroxy-3-cyclohexene-1-carboxylate (SEPHCHC) and the formation of 2-succinyl-6-hydroxy-2,4-cyclohexadiene-1-carboxylate (SHCHC). This is 2-succinyl-6-hydroxy-2,4-cyclohexadiene-1-carboxylate synthase from Yersinia pseudotuberculosis serotype IB (strain PB1/+).